The following is a 207-amino-acid chain: ATP synthase subunit b 2 (207 aa).

A helical membrane pass occupies residues 53-72 (TYASQLLWLVITFGVFYLLM).

Belongs to the ATPase B chain family. In terms of assembly, F-type ATPases have 2 components, F(1) - the catalytic core - and F(0) - the membrane proton channel. F(1) has five subunits: alpha(3), beta(3), gamma(1), delta(1), epsilon(1). F(0) has three main subunits: a(1), b(2) and c(10-14). The alpha and beta chains form an alternating ring which encloses part of the gamma chain. F(1) is attached to F(0) by a central stalk formed by the gamma and epsilon chains, while a peripheral stalk is formed by the delta and b chains.

It is found in the cell inner membrane. In terms of biological role, f(1)F(0) ATP synthase produces ATP from ADP in the presence of a proton or sodium gradient. F-type ATPases consist of two structural domains, F(1) containing the extramembraneous catalytic core and F(0) containing the membrane proton channel, linked together by a central stalk and a peripheral stalk. During catalysis, ATP synthesis in the catalytic domain of F(1) is coupled via a rotary mechanism of the central stalk subunits to proton translocation. Functionally, component of the F(0) channel, it forms part of the peripheral stalk, linking F(1) to F(0). The b'-subunit is a diverged and duplicated form of b found in plants and photosynthetic bacteria. The chain is ATP synthase subunit b 2 (atpF2) from Rhizobium etli (strain ATCC 51251 / DSM 11541 / JCM 21823 / NBRC 15573 / CFN 42).